Consider the following 249-residue polypeptide: Tetraspanin-7 (249 aa).

The Cytoplasmic portion of the chain corresponds to 1–16; the sequence is MASRRMETKPVITCLK. Residues 17–40 traverse the membrane as a helical segment; it reads TLLIIYSFVFWITGVILLAVGVWG. The Extracellular portion of the chain corresponds to 41-56; sequence KLTLGTYISLIAENST. Asn54 carries an N-linked (GlcNAc...) asparagine glycan. The helical transmembrane segment at 57–75 threads the bilayer; it reads NAPYVLIGTGTTIVVFGLF. Over 76–86 the chain is Cytoplasmic; sequence GCFATCRGSPW. A helical transmembrane segment spans residues 87–112; that stretch reads MLKLYAMFLSLVFLAELVAGISGFVF. Topologically, residues 113 to 213 are extracellular; sequence RHEIKDTFLR…LVTSFMETNM (101 aa). Asn155, Asn158, Asn177, and Asn188 each carry an N-linked (GlcNAc...) asparagine glycan. The chain crosses the membrane as a helical span at residues 214–234; sequence GIIAGVAFGIAFSQLIGMLLA. The Cytoplasmic segment spans residues 235–249; that stretch reads CCLSRFITANQYEMV.

The protein belongs to the tetraspanin (TM4SF) family.

Its subcellular location is the membrane. Its function is as follows. May be involved in cell proliferation and cell motility. In Mus musculus (Mouse), this protein is Tetraspanin-7 (Tspan7).